We begin with the raw amino-acid sequence, 695 residues long: Elongation factor G (695 aa).

The tr-type G domain occupies 12–286 (DKIRNIGIMA…AVIDYLPSPL (275 aa)). Residues 21–28 (AHIDAGKT), 85–89 (DTPGH), and 139–142 (NKMD) contribute to the GTP site.

The protein belongs to the TRAFAC class translation factor GTPase superfamily. Classic translation factor GTPase family. EF-G/EF-2 subfamily.

It is found in the cytoplasm. Catalyzes the GTP-dependent ribosomal translocation step during translation elongation. During this step, the ribosome changes from the pre-translocational (PRE) to the post-translocational (POST) state as the newly formed A-site-bound peptidyl-tRNA and P-site-bound deacylated tRNA move to the P and E sites, respectively. Catalyzes the coordinated movement of the two tRNA molecules, the mRNA and conformational changes in the ribosome. This is Elongation factor G from Thermotoga neapolitana (strain ATCC 49049 / DSM 4359 / NBRC 107923 / NS-E).